The sequence spans 168 residues: Calcium-binding protein 2 (168 aa).

EF-hand domains lie at 13–48, 48–83, 88–123, and 124–159; these read GMEK…AGKK, KNPE…MNDE, VLNW…QGAE, and DPEL…KKFS. Ca(2+) contacts are provided by Asp-26, Asp-28, Asn-30, Lys-32, Glu-37, Asp-61, Asp-63, Asn-65, Glu-67, Glu-72, Asp-101, Asp-103, Asp-105, Lys-107, Glu-112, Asp-137, Asp-139, Asp-141, and Glu-148.

Its function is as follows. Not known; probably binds four calcium ions. In Dictyostelium discoideum (Social amoeba), this protein is Calcium-binding protein 2 (cbp2).